The primary structure comprises 218 residues: uncharacterized protein (218 aa).

This is an uncharacterized protein from Rickettsia prowazekii (strain Madrid E).